The following is a 644-amino-acid chain: DNA gyrase subunit B (644 aa).

The region spanning 429 to 543 is the Toprim domain; sequence CEIFLVEGDS…AGYVYIAQPP (115 aa). Positions 435, 508, and 510 each coordinate Mg(2+).

It belongs to the type II topoisomerase GyrB family. Heterotetramer, composed of two GyrA and two GyrB chains. In the heterotetramer, GyrA contains the active site tyrosine that forms a transient covalent intermediate with DNA, while GyrB binds cofactors and catalyzes ATP hydrolysis. Mg(2+) serves as cofactor. It depends on Mn(2+) as a cofactor. The cofactor is Ca(2+).

Its subcellular location is the cytoplasm. The enzyme catalyses ATP-dependent breakage, passage and rejoining of double-stranded DNA.. A type II topoisomerase that negatively supercoils closed circular double-stranded (ds) DNA in an ATP-dependent manner to modulate DNA topology and maintain chromosomes in an underwound state. Negative supercoiling favors strand separation, and DNA replication, transcription, recombination and repair, all of which involve strand separation. Also able to catalyze the interconversion of other topological isomers of dsDNA rings, including catenanes and knotted rings. Type II topoisomerases break and join 2 DNA strands simultaneously in an ATP-dependent manner. The sequence is that of DNA gyrase subunit B from Staphylococcus aureus (strain COL).